We begin with the raw amino-acid sequence, 1761 residues long: Nonribosomal peptide synthetase 6 (1761 aa).

An adenylation region spans residues 63 to 468 (ERAALHPEKI…GRQDQQVKLR (406 aa)). The 76-residue stretch at 600–675 (EATTEMELKL…SMAEKAKPVS (76 aa)) folds into the Carrier 1 domain. Ser636 carries the post-translational modification O-(pantetheine 4'-phosphoryl)serine. Positions 712–1135 (VEDVYPCTPL…AVLDPVEAQD (424 aa)) are condensation 1. 2 consecutive Carrier domains span residues 1169–1242 (SPNE…SNER) and 1237–1313 (SASN…EEET). Ser1203 and Ser1274 each carry O-(pantetheine 4'-phosphoryl)serine. The condensation 2 stretch occupies residues 1354–1677 (IYPTRPLQQL…ESVQWFDTVV (324 aa)).

It belongs to the NRP synthetase family.

It participates in siderophore biosynthesis. In terms of biological role, nonribosomal peptide synthetase; part of the gene cluster that mediates the biosynthesis of hydroxamate-containing siderophores that play a critical role in virulence. Cochliobolus heterostrophus produces extracellular coprogen-type siderophores including coprogen, neocoprogen I and neocoprogen II, as well as the intracellular siderophore ferricrocin. The role of extracellular siderophores is to supply iron to the fungus during plant infection, and the intracellular ferricrocin is required for intracellular iron distribution and storage with a crucial role in ascus and ascospore development. SIDA2 catalyzes the conversion of L-ornithine to N(5)-hydroxyornithine, the first step in the biosynthesis of all hydroxamate-containing siderophores. The assembly of extracellular coprogen-type siderophores is then performed by the nonribosomal peptide synthetase (NRPS) NPS6 whereas the intracellular siderophore ferricrocin is assembled by NPS2. The sequence is that of Nonribosomal peptide synthetase 6 from Cochliobolus heterostrophus (strain C4 / ATCC 48331 / race T) (Southern corn leaf blight fungus).